Consider the following 199-residue polypeptide: Small ribosomal subunit protein uS4 (199 aa).

One can recognise an S4 RNA-binding domain in the interval 91-154; it reads SRLDNLVYRM…RGLQLIKDAL (64 aa).

Belongs to the universal ribosomal protein uS4 family. In terms of assembly, part of the 30S ribosomal subunit. Contacts protein S5. The interaction surface between S4 and S5 is involved in control of translational fidelity.

One of the primary rRNA binding proteins, it binds directly to 16S rRNA where it nucleates assembly of the body of the 30S subunit. Its function is as follows. With S5 and S12 plays an important role in translational accuracy. This chain is Small ribosomal subunit protein uS4, found in Brevibacillus brevis (strain 47 / JCM 6285 / NBRC 100599).